The sequence spans 146 residues: Globin (146 aa).

The residue at position 1 (alanine 1) is an N-acetylalanine. The 146-residue stretch at 1 to 146 folds into the Globin domain; that stretch reads ALTEPQKTAL…LLTMLIKAHS (146 aa). Heme b contacts are provided by histidine 65 and histidine 97.

This sequence belongs to the globin family. In terms of assembly, homodimer.

This chain is Globin, found in Buccinum undatum (Common whelk).